The sequence spans 334 residues: MSPPSATYDVVAAAATSVAKTNKPSTAHGSLTSTSTILDEFAGKWDDFSFGHIRESQVSRAMTRRYFEDLDTYAESDIVIVGAGSCGLSTAYVLGKARPDLKIAVIEASVSPGGGAWLGGQLFSAMVLRKPADRFLDDLGVPYEEEPSNPNMVVIKHAALFTSTLLSKVLSFPNIKLFNATCVEDLITRPAPAAGDGEGIRIAGVVTNWTLVTLHHDDHSCMDPNTINAPLVISTTGHDGPFGAFCAKRLVSMAAIEKLGGMRGLDMNSAEEAIVKNTREVTKGLIIGGMELSEIDGWHRMGPIFSAMMLSGVRAAEVALEVFEERKRECADKK.

Residues cysteine 86, 107-108 (EA), glycine 115, and valine 183 contribute to the substrate site. Position 221 is a 2,3-didehydroalanine (Cys) (cysteine 221). Substrate contacts are provided by residues aspartate 223, histidine 238, methionine 290, and 300–302 (RMG).

It belongs to the THI4 family. In terms of assembly, homooctamer. It depends on Fe cation as a cofactor. In terms of processing, during the catalytic reaction, a sulfide is transferred from Cys-221 to a reaction intermediate, generating a dehydroalanine residue.

The protein resides in the cytoplasm. The protein localises to the nucleus. The enzyme catalyses [ADP-thiazole synthase]-L-cysteine + glycine + NAD(+) = [ADP-thiazole synthase]-dehydroalanine + ADP-5-ethyl-4-methylthiazole-2-carboxylate + nicotinamide + 3 H2O + 2 H(+). Involved in biosynthesis of the thiamine precursor thiazole. Catalyzes the conversion of NAD and glycine to adenosine diphosphate 5-(2-hydroxyethyl)-4-methylthiazole-2-carboxylic acid (ADT), an adenylated thiazole intermediate. The reaction includes an iron-dependent sulfide transfer from a conserved cysteine residue of the protein to a thiazole intermediate. The enzyme can only undergo a single turnover, which suggests it is a suicide enzyme. May have additional roles in adaptation to various stress conditions and in DNA damage tolerance. The protein is Thiamine thiazole synthase of Ajellomyces capsulatus (strain G186AR / H82 / ATCC MYA-2454 / RMSCC 2432) (Darling's disease fungus).